Consider the following 376-residue polypeptide: UDP-4-amino-4,6-dideoxy-N-acetyl-beta-L-altrosamine transaminase (376 aa).

Substrate is bound by residues tyrosine 4, 24 to 27, alanine 54, and serine 176; that span reads EILT. Lysine 181 is subject to N6-(pyridoxal phosphate)lysine. Residues asparagine 226 and 311–314 contribute to the substrate site; that span reads QVHY.

Belongs to the DegT/DnrJ/EryC1 family.

The enzyme catalyses UDP-4-amino-4,6-dideoxy-N-acetyl-beta-L-altrosamine + 2-oxoglutarate = UDP-2-acetamido-2,6-dideoxy-beta-L-arabino-hex-4-ulose + L-glutamate. Functionally, catalyzes the second step in the biosynthesis of pseudaminic acid, a sialic-acid-like sugar that is used to modify flagellin. Uses UDP-2-acetamido-2,6-dideoxy-beta-L-arabino-4-hexulose as substrate producing UDP-4-amino-4,6-dideoxy-beta-L-AltNAc. The sequence is that of UDP-4-amino-4,6-dideoxy-N-acetyl-beta-L-altrosamine transaminase (pseC) from Campylobacter jejuni subsp. jejuni serotype O:23/36 (strain 81-176).